A 338-amino-acid chain; its full sequence is Fructose-1,6-bisphosphatase class 1 (338 aa).

The Mg(2+) site is built by Glu90, Asp112, Leu114, and Asp115. Residues 115–118, Asn207, and Lys273 contribute to the substrate site; that span reads DGSS. Glu279 lines the Mg(2+) pocket.

The protein belongs to the FBPase class 1 family. As to quaternary structure, homotetramer. It depends on Mg(2+) as a cofactor.

It localises to the cytoplasm. It catalyses the reaction beta-D-fructose 1,6-bisphosphate + H2O = beta-D-fructose 6-phosphate + phosphate. It participates in carbohydrate biosynthesis; gluconeogenesis. The chain is Fructose-1,6-bisphosphatase class 1 from Stenotrophomonas maltophilia (strain K279a).